The primary structure comprises 360 residues: 3-dehydroquinate synthase (360 aa).

NAD(+) is bound by residues 72–77 (DGEEYK), 106–110 (GVIGD), 130–131 (TT), Lys-143, and Lys-152. Zn(2+) is bound by residues Glu-185, His-248, and His-265.

It belongs to the sugar phosphate cyclases superfamily. Dehydroquinate synthase family. Requires Co(2+) as cofactor. Zn(2+) serves as cofactor. It depends on NAD(+) as a cofactor.

The protein resides in the cytoplasm. The catalysed reaction is 7-phospho-2-dehydro-3-deoxy-D-arabino-heptonate = 3-dehydroquinate + phosphate. It participates in metabolic intermediate biosynthesis; chorismate biosynthesis; chorismate from D-erythrose 4-phosphate and phosphoenolpyruvate: step 2/7. Its function is as follows. Catalyzes the conversion of 3-deoxy-D-arabino-heptulosonate 7-phosphate (DAHP) to dehydroquinate (DHQ). The sequence is that of 3-dehydroquinate synthase from Geotalea uraniireducens (strain Rf4) (Geobacter uraniireducens).